A 77-amino-acid chain; its full sequence is Putative sulfur carrier protein AF_0188 (77 aa).

C11 functions as the Cysteine persulfide intermediate in the catalytic mechanism.

This sequence belongs to the sulfur carrier protein TusA family.

The polypeptide is Putative sulfur carrier protein AF_0188 (Archaeoglobus fulgidus (strain ATCC 49558 / DSM 4304 / JCM 9628 / NBRC 100126 / VC-16)).